The following is an 85-amino-acid chain: RNA-binding protein Hfq (85 aa).

The Sm domain maps to 9-69 (DQLLNTARKD…ISTIIPAKII (61 aa)).

This sequence belongs to the Hfq family. Homohexamer.

Functionally, RNA chaperone that binds small regulatory RNA (sRNAs) and mRNAs to facilitate mRNA translational regulation in response to envelope stress, environmental stress and changes in metabolite concentrations. Also binds with high specificity to tRNAs. The protein is RNA-binding protein Hfq of Leptospira interrogans serogroup Icterohaemorrhagiae serovar copenhageni (strain Fiocruz L1-130).